The sequence spans 427 residues: Trigger factor (427 aa).

One can recognise a PPIase FKBP-type domain in the interval 163 to 248 (GDTVVIDFVG…VNEVKAKEVP (86 aa)).

This sequence belongs to the FKBP-type PPIase family. Tig subfamily.

The protein localises to the cytoplasm. It catalyses the reaction [protein]-peptidylproline (omega=180) = [protein]-peptidylproline (omega=0). Involved in protein export. Acts as a chaperone by maintaining the newly synthesized protein in an open conformation. Functions as a peptidyl-prolyl cis-trans isomerase. This Streptococcus thermophilus (strain CNRZ 1066) protein is Trigger factor.